Here is a 185-residue protein sequence, read N- to C-terminus: Riboflavin kinase (185 aa).

Residues Thr41 and Asn43 each contribute to the Mg(2+) site. Catalysis depends on Glu122, which acts as the Nucleophile.

Belongs to the flavokinase family. Zn(2+) serves as cofactor. It depends on Mg(2+) as a cofactor.

It carries out the reaction riboflavin + ATP = FMN + ADP + H(+). Its pathway is cofactor biosynthesis; FMN biosynthesis; FMN from riboflavin (ATP route): step 1/1. Catalyzes the phosphorylation of riboflavin (vitamin B2) to form flavin mononucleotide (FMN) coenzyme. The protein is Riboflavin kinase (FMN1) of Kluyveromyces lactis (strain ATCC 8585 / CBS 2359 / DSM 70799 / NBRC 1267 / NRRL Y-1140 / WM37) (Yeast).